Consider the following 325-residue polypeptide: tRNA U34 carboxymethyltransferase (325 aa).

Carboxy-S-adenosyl-L-methionine contacts are provided by residues K91, W105, K110, G130, 152–154 (DPS), M196, Y200, and R315.

This sequence belongs to the class I-like SAM-binding methyltransferase superfamily. CmoB family. In terms of assembly, homotetramer.

It catalyses the reaction carboxy-S-adenosyl-L-methionine + 5-hydroxyuridine(34) in tRNA = 5-carboxymethoxyuridine(34) in tRNA + S-adenosyl-L-homocysteine + H(+). Functionally, catalyzes carboxymethyl transfer from carboxy-S-adenosyl-L-methionine (Cx-SAM) to 5-hydroxyuridine (ho5U) to form 5-carboxymethoxyuridine (cmo5U) at position 34 in tRNAs. This Aeromonas hydrophila subsp. hydrophila (strain ATCC 7966 / DSM 30187 / BCRC 13018 / CCUG 14551 / JCM 1027 / KCTC 2358 / NCIMB 9240 / NCTC 8049) protein is tRNA U34 carboxymethyltransferase.